The sequence spans 510 residues: NADP-dependent fatty aldehyde dehydrogenase (510 aa).

NADP(+) is bound at residue 229-234 (GSVGGG). Active-site residues include Glu-253 and Cys-289.

It belongs to the aldehyde dehydrogenase family. As to quaternary structure, homodimer.

It carries out the reaction an aldehyde + NADP(+) + H2O = a carboxylate + NADPH + 2 H(+). Functionally, catalyzes the oxidation of long-chain aliphatic aldehydes to acids. May be implicated in controlling luminescence as it catalyzes the oxidation of the fatty aldehyde substrate for the light-emitting reaction. The protein is NADP-dependent fatty aldehyde dehydrogenase (aldH) of Vibrio harveyi (Beneckea harveyi).